The sequence spans 22 residues: Mu-conotoxin CnIIIC (22 aa).

Position 1 is a pyrrolidone carboxylic acid; partial (glutamine 1). 3 disulfide bridges follow: cysteine 3–cysteine 15, cysteine 4–cysteine 21, and cysteine 10–cysteine 22. Cysteine 22 bears the Cysteine amide mark.

The protein belongs to the conotoxin M superfamily. As to expression, expressed by the venom duct.

It localises to the secreted. In terms of biological role, mu-conotoxins block voltage-gated sodium channels (Nav). This synthetic toxin blocks both voltage-gated sodium channels and nicotinic acetylcholine receptor (nAChR). Inhibits the skeletal muscle rNav1.4/SCN4A (IC(50)=1.3 nM) and the brain rNav1.2/SCN2A in a long-lasting manner. A low inhibition is also observed on neuronal mNav1.6/SCN8A and mNav1.7/SCN9A. Modestly blocks nAChR alpha-3/beta-2 subtype (IC(50)=450 nM) (partially reversible) and, to a lesser extent, alpha-7 and alpha-4/beta-2 subtypes (reversible). In vitro, decreases twitch tension in mouse hemidiaphragms (IC(50)=150 nM), and displays a high blocking effect in mouse extensor digitorum longus muscles (IC(50)=46 nM). This is Mu-conotoxin CnIIIC from Conus consors (Singed cone).